Consider the following 125-residue polypeptide: Large ribosomal subunit protein bL12 (125 aa).

It belongs to the bacterial ribosomal protein bL12 family. Homodimer. Part of the ribosomal stalk of the 50S ribosomal subunit. Forms a multimeric L10(L12)X complex, where L10 forms an elongated spine to which 2 to 4 L12 dimers bind in a sequential fashion. Binds GTP-bound translation factors.

Its function is as follows. Forms part of the ribosomal stalk which helps the ribosome interact with GTP-bound translation factors. Is thus essential for accurate translation. The sequence is that of Large ribosomal subunit protein bL12 from Hyphomonas neptunium (strain ATCC 15444).